Here is a 160-residue protein sequence, read N- to C-terminus: Putative antiporter subunit mnhE2 (160 aa).

Transmembrane regions (helical) follow at residues 22–42, 55–75, and 100–120; these read HFKF…IYIL, IWVA…SSIS, and SDWS…STVI.

It belongs to the CPA3 antiporters (TC 2.A.63) subunit E family. In terms of assembly, may form a heterooligomeric complex that consists of seven subunits: mnhA2, mnhB2, mnhC2, mnhD2, mnhE2, mnhF2 and mnhG2.

Its subcellular location is the cell membrane. The sequence is that of Putative antiporter subunit mnhE2 (mnhE2) from Staphylococcus aureus (strain USA300).